We begin with the raw amino-acid sequence, 349 residues long: AA9 family lytic polysaccharide monooxygenase C (349 aa).

Residues 1 to 19 (MKSTFGLLALAAAAKLVSA) form the signal peptide. Histidine 20 and histidine 102 together coordinate Cu(2+). Residues cysteine 62 and cysteine 183 are joined by a disulfide bond. Histidine 169 provides a ligand contact to O2. Tyrosine 180 contacts Cu(2+). The tract at residues 233–304 (DGSSSGSSGS…SGSNSGSDSC (72 aa)) is disordered. 2 stretches are compositionally biased toward low complexity: residues 234 to 262 (GSSS…AAPT) and 269 to 304 (TSAT…SDSC). The CBM1 domain maps to 311 to 347 (GSVKIYGQCGGQNYSGPTSCEAGLICKEWNPYYHQCV). Intrachain disulfides connect cysteine 319–cysteine 336 and cysteine 330–cysteine 346. The N-linked (GlcNAc...) asparagine glycan is linked to asparagine 323.

This sequence belongs to the polysaccharide monooxygenase AA9 family. The cofactor is Cu(2+).

The protein localises to the secreted. The enzyme catalyses [(1-&gt;4)-beta-D-glucosyl]n+m + reduced acceptor + O2 = 4-dehydro-beta-D-glucosyl-[(1-&gt;4)-beta-D-glucosyl]n-1 + [(1-&gt;4)-beta-D-glucosyl]m + acceptor + H2O.. In terms of biological role, lytic polysaccharide monooxygenase (LPMO) that depolymerizes crystalline and amorphous polysaccharides via the oxidation of scissile alpha- or beta-(1-4)-glycosidic bonds, yielding C4 oxidation products. Catalysis by LPMOs requires the reduction of the active-site copper from Cu(II) to Cu(I) by a reducing agent and H(2)O(2) or O(2) as a cosubstrate. Active on cellulose and cello-oligosaccharides, as well as plant cell wall-derived hemicellulosic polysaccharides. Also active on cello-oligosaccharides such as cellohexaose, cellopentaose or cellotetraose. This is AA9 family lytic polysaccharide monooxygenase C from Aspergillus fumigatus (strain ATCC MYA-4609 / CBS 101355 / FGSC A1100 / Af293) (Neosartorya fumigata).